The primary structure comprises 210 residues: Cytidylate kinase (210 aa).

An ATP-binding site is contributed by 7-15; it reads GPAASGKGT.

It belongs to the cytidylate kinase family. Type 1 subfamily.

The protein localises to the cytoplasm. It carries out the reaction CMP + ATP = CDP + ADP. The catalysed reaction is dCMP + ATP = dCDP + ADP. The polypeptide is Cytidylate kinase (Methylobacterium sp. (strain 4-46)).